Consider the following 129-residue polypeptide: MEKLEQIVNEIEQLTVAELAELVKMLEDKFGVSASAPVMAMPVAGAAAGGGAAAEEKTEFDVVLKSFGAKKINVIKVVREITGLGLKEAKDLVEKAGTPDAVIKQGVNKDEAEEIKKKLEEAGAEVELK.

It belongs to the bacterial ribosomal protein bL12 family. Homodimer. Part of the ribosomal stalk of the 50S ribosomal subunit. Forms a multimeric L10(L12)X complex, where L10 forms an elongated spine to which 2 to 4 L12 dimers bind in a sequential fashion. Binds GTP-bound translation factors.

In terms of biological role, forms part of the ribosomal stalk which helps the ribosome interact with GTP-bound translation factors. Is thus essential for accurate translation. This is Large ribosomal subunit protein bL12 from Thermosipho melanesiensis (strain DSM 12029 / CIP 104789 / BI429).